A 60-amino-acid polypeptide reads, in one-letter code: Large ribosomal subunit protein uL30 (60 aa).

It belongs to the universal ribosomal protein uL30 family. In terms of assembly, part of the 50S ribosomal subunit.

The polypeptide is Large ribosomal subunit protein uL30 (Albidiferax ferrireducens (strain ATCC BAA-621 / DSM 15236 / T118) (Rhodoferax ferrireducens)).